Consider the following 381-residue polypeptide: E3 ubiquitin-protein ligase RNF133 (381 aa).

The 103-residue stretch at 65-167 (SSILKRVAGV…VKGMEILHLI (103 aa)) folds into the PA domain. Residues 186–208 (WLNHYFVSFMIVTTATLAYFTFY) traverse the membrane as a helical segment. The RING-type; atypical zinc finger occupies 256–297 (CVICFEAYKPNEIVRILTCKHFFHKNCIDPWILAHGTCPMCK). Positions 340–381 (LPPARTSSKVTHVQEHPTSVNVGSQPPEAEETGHPSFGQHDL) are disordered. The span at 344–363 (RTSSKVTHVQEHPTSVNVGS) shows a compositional bias: polar residues.

Interacts with E3 ligase UBE2J1. In terms of processing, auto-ubiquitinated.

The protein localises to the endoplasmic reticulum membrane. The catalysed reaction is S-ubiquitinyl-[E2 ubiquitin-conjugating enzyme]-L-cysteine + [acceptor protein]-L-lysine = [E2 ubiquitin-conjugating enzyme]-L-cysteine + N(6)-ubiquitinyl-[acceptor protein]-L-lysine.. Its pathway is protein modification; protein ubiquitination. Its function is as follows. Has E3 ubiquitin-protein ligase activity. Plays a role in male fecundity through the interaction with the E2 ubituitin-protein ligase UBE2J1. This Rattus norvegicus (Rat) protein is E3 ubiquitin-protein ligase RNF133 (Rnf133).